The primary structure comprises 209 residues: NADH-quinone oxidoreductase subunit C (209 aa).

This sequence belongs to the complex I 30 kDa subunit family. As to quaternary structure, NDH-1 is composed of 14 different subunits. Subunits NuoB, C, D, E, F, and G constitute the peripheral sector of the complex.

The protein resides in the cell inner membrane. The enzyme catalyses a quinone + NADH + 5 H(+)(in) = a quinol + NAD(+) + 4 H(+)(out). NDH-1 shuttles electrons from NADH, via FMN and iron-sulfur (Fe-S) centers, to quinones in the respiratory chain. The immediate electron acceptor for the enzyme in this species is believed to be ubiquinone. Couples the redox reaction to proton translocation (for every two electrons transferred, four hydrogen ions are translocated across the cytoplasmic membrane), and thus conserves the redox energy in a proton gradient. This is NADH-quinone oxidoreductase subunit C from Phenylobacterium zucineum (strain HLK1).